We begin with the raw amino-acid sequence, 159 residues long: Small ribosomal subunit protein uS17 (159 aa).

Belongs to the universal ribosomal protein uS17 family.

It is found in the cytoplasm. The chain is Small ribosomal subunit protein uS17 (RPS11) from Zea mays (Maize).